A 156-amino-acid chain; its full sequence is Small ribosomal subunit protein uS7 (156 aa).

The protein belongs to the universal ribosomal protein uS7 family. As to quaternary structure, part of the 30S ribosomal subunit. Contacts proteins S9 and S11.

One of the primary rRNA binding proteins, it binds directly to 16S rRNA where it nucleates assembly of the head domain of the 30S subunit. Is located at the subunit interface close to the decoding center, probably blocks exit of the E-site tRNA. This is Small ribosomal subunit protein uS7 from Rubrobacter xylanophilus (strain DSM 9941 / JCM 11954 / NBRC 16129 / PRD-1).